The following is a 451-amino-acid chain: tRNA modification GTPase MnmE (451 aa).

(6S)-5-formyl-5,6,7,8-tetrahydrofolate contacts are provided by arginine 28, glutamate 85, and lysine 124. The TrmE-type G domain occupies 220–377; that stretch reads GMNVVLVGQP…LRSELLRVAG (158 aa). A K(+)-binding site is contributed by asparagine 230. GTP contacts are provided by residues 230–235, 249–255, and 274–277; these read NVGKSS, TDIAGTT, and DTAG. Serine 234 is a binding site for Mg(2+). Residues threonine 249, isoleucine 251, and threonine 254 each coordinate K(+). Position 255 (threonine 255) interacts with Mg(2+). Lysine 451 contributes to the (6S)-5-formyl-5,6,7,8-tetrahydrofolate binding site.

The protein belongs to the TRAFAC class TrmE-Era-EngA-EngB-Septin-like GTPase superfamily. TrmE GTPase family. Homodimer. Heterotetramer of two MnmE and two MnmG subunits. Requires K(+) as cofactor.

Its subcellular location is the cytoplasm. Functionally, exhibits a very high intrinsic GTPase hydrolysis rate. Involved in the addition of a carboxymethylaminomethyl (cmnm) group at the wobble position (U34) of certain tRNAs, forming tRNA-cmnm(5)s(2)U34. This chain is tRNA modification GTPase MnmE, found in Aromatoleum aromaticum (strain DSM 19018 / LMG 30748 / EbN1) (Azoarcus sp. (strain EbN1)).